Consider the following 72-residue polypeptide: Translational regulator CsrA (72 aa).

This sequence belongs to the CsrA/RsmA family. In terms of assembly, homodimer; the beta-strands of each monomer intercalate to form a hydrophobic core, while the alpha-helices form wings that extend away from the core.

It localises to the cytoplasm. Functionally, a translational regulator that binds mRNA to regulate translation initiation and/or mRNA stability. Usually binds in the 5'-UTR at or near the Shine-Dalgarno sequence preventing ribosome-binding, thus repressing translation. Its main target seems to be the major flagellin gene, while its function is anatagonized by FliW. The protein is Translational regulator CsrA of Clostridium botulinum (strain ATCC 19397 / Type A).